The chain runs to 570 residues: Sulfite reductase [NADPH] hemoprotein beta-component (570 aa).

Residues Cys434, Cys440, Cys479, and Cys483 each contribute to the [4Fe-4S] cluster site. Cys483 contributes to the siroheme binding site.

The protein belongs to the nitrite and sulfite reductase 4Fe-4S domain family. In terms of assembly, alpha(8)-beta(8). The alpha component is a flavoprotein, the beta component is a hemoprotein. It depends on siroheme as a cofactor. [4Fe-4S] cluster serves as cofactor.

The enzyme catalyses hydrogen sulfide + 3 NADP(+) + 3 H2O = sulfite + 3 NADPH + 4 H(+). It functions in the pathway sulfur metabolism; hydrogen sulfide biosynthesis; hydrogen sulfide from sulfite (NADPH route): step 1/1. In terms of biological role, component of the sulfite reductase complex that catalyzes the 6-electron reduction of sulfite to sulfide. This is one of several activities required for the biosynthesis of L-cysteine from sulfate. This Salmonella schwarzengrund (strain CVM19633) protein is Sulfite reductase [NADPH] hemoprotein beta-component.